We begin with the raw amino-acid sequence, 342 residues long: S-adenosylmethionine:tRNA ribosyltransferase-isomerase (342 aa).

Belongs to the QueA family. As to quaternary structure, monomer.

It localises to the cytoplasm. It catalyses the reaction 7-aminomethyl-7-carbaguanosine(34) in tRNA + S-adenosyl-L-methionine = epoxyqueuosine(34) in tRNA + adenine + L-methionine + 2 H(+). It participates in tRNA modification; tRNA-queuosine biosynthesis. Functionally, transfers and isomerizes the ribose moiety from AdoMet to the 7-aminomethyl group of 7-deazaguanine (preQ1-tRNA) to give epoxyqueuosine (oQ-tRNA). This chain is S-adenosylmethionine:tRNA ribosyltransferase-isomerase, found in Streptococcus pyogenes serotype M3 (strain ATCC BAA-595 / MGAS315).